The following is a 599-amino-acid chain: Elongation factor 4 (599 aa).

The 183-residue stretch at Lys-2–Glu-184 folds into the tr-type G domain. GTP-binding positions include Asp-14 to Thr-19 and Asn-131 to Asp-134.

It belongs to the TRAFAC class translation factor GTPase superfamily. Classic translation factor GTPase family. LepA subfamily.

The protein resides in the cell inner membrane. It catalyses the reaction GTP + H2O = GDP + phosphate + H(+). Its function is as follows. Required for accurate and efficient protein synthesis under certain stress conditions. May act as a fidelity factor of the translation reaction, by catalyzing a one-codon backward translocation of tRNAs on improperly translocated ribosomes. Back-translocation proceeds from a post-translocation (POST) complex to a pre-translocation (PRE) complex, thus giving elongation factor G a second chance to translocate the tRNAs correctly. Binds to ribosomes in a GTP-dependent manner. In Klebsiella pneumoniae subsp. pneumoniae (strain ATCC 700721 / MGH 78578), this protein is Elongation factor 4.